The sequence spans 285 residues: 2,3,4,5-tetrahydropyridine-2,6-dicarboxylate N-succinyltransferase (285 aa).

Residues Arg111 and Asp148 each coordinate substrate.

The protein belongs to the transferase hexapeptide repeat family. As to quaternary structure, homotrimer.

It localises to the cytoplasm. It catalyses the reaction (S)-2,3,4,5-tetrahydrodipicolinate + succinyl-CoA + H2O = (S)-2-succinylamino-6-oxoheptanedioate + CoA. It functions in the pathway amino-acid biosynthesis; L-lysine biosynthesis via DAP pathway; LL-2,6-diaminopimelate from (S)-tetrahydrodipicolinate (succinylase route): step 1/3. The protein is 2,3,4,5-tetrahydropyridine-2,6-dicarboxylate N-succinyltransferase of Sinorhizobium fredii (strain NBRC 101917 / NGR234).